The primary structure comprises 492 residues: Protein nucleotidyltransferase YdiU (492 aa).

ATP is bound by residues glycine 95, glycine 97, arginine 98, lysine 118, aspartate 130, glycine 131, arginine 181, and arginine 188. Aspartate 257 functions as the Proton acceptor in the catalytic mechanism. Mg(2+) contacts are provided by asparagine 258 and aspartate 267. Position 267 (aspartate 267) interacts with ATP. Basic and acidic residues predominate over residues 466–475; sequence YDDQPEHAEY. The tract at residues 466 to 492 is disordered; sequence YDDQPEHAEYRQPPPPSEKPYQTFCGT.

Belongs to the SELO family. Mg(2+) is required as a cofactor. It depends on Mn(2+) as a cofactor.

It carries out the reaction L-seryl-[protein] + ATP = 3-O-(5'-adenylyl)-L-seryl-[protein] + diphosphate. The catalysed reaction is L-threonyl-[protein] + ATP = 3-O-(5'-adenylyl)-L-threonyl-[protein] + diphosphate. The enzyme catalyses L-tyrosyl-[protein] + ATP = O-(5'-adenylyl)-L-tyrosyl-[protein] + diphosphate. It catalyses the reaction L-histidyl-[protein] + UTP = N(tele)-(5'-uridylyl)-L-histidyl-[protein] + diphosphate. It carries out the reaction L-seryl-[protein] + UTP = O-(5'-uridylyl)-L-seryl-[protein] + diphosphate. The catalysed reaction is L-tyrosyl-[protein] + UTP = O-(5'-uridylyl)-L-tyrosyl-[protein] + diphosphate. Its function is as follows. Nucleotidyltransferase involved in the post-translational modification of proteins. It can catalyze the addition of adenosine monophosphate (AMP) or uridine monophosphate (UMP) to a protein, resulting in modifications known as AMPylation and UMPylation. The chain is Protein nucleotidyltransferase YdiU from Syntrophotalea carbinolica (strain DSM 2380 / NBRC 103641 / GraBd1) (Pelobacter carbinolicus).